We begin with the raw amino-acid sequence, 202 residues long: Cyclin-U4-1 (202 aa).

This sequence belongs to the cyclin family. Cyclin U/P subfamily. As to quaternary structure, interacts with CDKA-1. In terms of tissue distribution, expressed in roots, stems and flowers. Expressed in the shoot apex, leaf primordia and young leaves.

This Arabidopsis thaliana (Mouse-ear cress) protein is Cyclin-U4-1 (CYCU4-1).